The primary structure comprises 375 residues: Histidine biosynthesis bifunctional protein HisB (375 aa).

Residues 1-168 (MTPILFVDRD…GIAHELADAP (168 aa)) form a histidinol-phosphatase region. D8 acts as the Nucleophile in catalysis. Mg(2+)-binding residues include D8, D10, and D128. The Proton donor role is filled by D10. The tract at residues 169 to 375 (RRAVVQRNTK…TALPSTKGAL (207 aa)) is imidazoleglycerol-phosphate dehydratase.

This sequence in the N-terminal section; belongs to the histidinol-phosphatase family. It in the C-terminal section; belongs to the imidazoleglycerol-phosphate dehydratase family. Mg(2+) is required as a cofactor.

The protein localises to the cytoplasm. The catalysed reaction is D-erythro-1-(imidazol-4-yl)glycerol 3-phosphate = 3-(imidazol-4-yl)-2-oxopropyl phosphate + H2O. It carries out the reaction L-histidinol phosphate + H2O = L-histidinol + phosphate. It participates in amino-acid biosynthesis; L-histidine biosynthesis; L-histidine from 5-phospho-alpha-D-ribose 1-diphosphate: step 6/9. Its pathway is amino-acid biosynthesis; L-histidine biosynthesis; L-histidine from 5-phospho-alpha-D-ribose 1-diphosphate: step 8/9. This Xanthomonas campestris pv. campestris (strain 8004) protein is Histidine biosynthesis bifunctional protein HisB.